The primary structure comprises 37 residues: Large ribosomal subunit protein bL36 (37 aa).

Belongs to the bacterial ribosomal protein bL36 family.

The polypeptide is Large ribosomal subunit protein bL36 (Francisella tularensis subsp. tularensis (strain FSC 198)).